Here is a 300-residue protein sequence, read N- to C-terminus: Fe(3+) dicitrate-binding periplasmic protein FecB (300 aa).

The N-terminal stretch at 1–21 is a signal peptide; sequence MLAFIRFLFAGLLLVISHAFA. The 257-residue stretch at 39–295 folds into the Fe/B12 periplasmic-binding domain; sequence RIVVLELSFA…DTVKIFHHQP (257 aa).

It belongs to the bacterial solute-binding protein 8 family. The complex is composed of two ATP-binding proteins (FecE), two transmembrane proteins (FecC and FecD) and a solute-binding protein (FecB). Interacts with FecC and FecD.

Its subcellular location is the periplasm. Part of the ABC transporter complex FecBCDE involved in citrate-dependent Fe(3+) uptake. Binds both iron-free and iron-loaded citrate although it binds iron-loaded citrate with a higher affinity. Binds different forms of Fe(3+)-citrate as well as citrate complexed with various representative Fe(3+)-mimics (Ga(3+), Al(3+), Sc(3+) and In(3+)) and a representative divalent metal ion (Mg(2+)). Can also bind various tricarboxylates in iron-free and iron-loaded form. This chain is Fe(3+) dicitrate-binding periplasmic protein FecB, found in Escherichia coli (strain K12).